A 588-amino-acid chain; its full sequence is Proline--tRNA ligase (588 aa).

It belongs to the class-II aminoacyl-tRNA synthetase family. ProS type 1 subfamily. In terms of assembly, homodimer.

The protein resides in the cytoplasm. It catalyses the reaction tRNA(Pro) + L-proline + ATP = L-prolyl-tRNA(Pro) + AMP + diphosphate. Catalyzes the attachment of proline to tRNA(Pro) in a two-step reaction: proline is first activated by ATP to form Pro-AMP and then transferred to the acceptor end of tRNA(Pro). As ProRS can inadvertently accommodate and process non-cognate amino acids such as alanine and cysteine, to avoid such errors it has two additional distinct editing activities against alanine. One activity is designated as 'pretransfer' editing and involves the tRNA(Pro)-independent hydrolysis of activated Ala-AMP. The other activity is designated 'posttransfer' editing and involves deacylation of mischarged Ala-tRNA(Pro). The misacylated Cys-tRNA(Pro) is not edited by ProRS. This Corynebacterium efficiens (strain DSM 44549 / YS-314 / AJ 12310 / JCM 11189 / NBRC 100395) protein is Proline--tRNA ligase.